The primary structure comprises 172 residues: Lipopolysaccharide export system protein LptA (172 aa).

The signal sequence occupies residues 1–23; the sequence is MKLVSNKILFLATMVLASSSAFA.

The protein belongs to the LptA family. As to quaternary structure, component of the lipopolysaccharide transport and assembly complex.

The protein resides in the periplasm. Its function is as follows. Involved in the assembly of lipopolysaccharide (LPS). Required for the translocation of LPS from the inner membrane to the outer membrane. May form a bridge between the inner membrane and the outer membrane, via interactions with LptC and LptD, thereby facilitating LPS transfer across the periplasm. This Haemophilus influenzae (strain ATCC 51907 / DSM 11121 / KW20 / Rd) protein is Lipopolysaccharide export system protein LptA.